Consider the following 361-residue polypeptide: Divinyl chlorophyll a/b light-harvesting protein PcbE (361 aa).

A run of 6 helical transmembrane segments spans residues 27 to 47 (FIGSHVAHTGLIAFTAGANTL), 88 to 108 (VAFVGIFHLICSFVYALAGLL), 149 to 169 (FILGHHLVFFGVANIWFVEWA), 210 to 230 (VMGGHAFLAFFQIGGGAFHIA), 250 to 270 (AVLSWSLAGIGWMAIIAAFWC), and 315 to 335 (LSNVHYYLGFFFIQGHLWHAI).

Belongs to the PsbB/PsbC family. IsiA/Pcb subfamily. As to quaternary structure, the antenna complex consists of divinyl chlorophylls (a and b) and divinyl chlorophyll a/b binding proteins and binds more divinyl chlorophyll b than does the antenna complex from high-light-adapted Prochlorococcus. Divinyl chlorophyll a is required as a cofactor. Divinyl chlorophyll b serves as cofactor.

The protein resides in the cellular thylakoid membrane. The antenna complex functions as a light receptor, it captures and delivers excitation energy to photosystems II and I. The Prochlorales pcb genes are not related to higher plant LHCs. The protein is Divinyl chlorophyll a/b light-harvesting protein PcbE (pcbE) of Prochlorococcus marinus (strain SARG / CCMP1375 / SS120).